The chain runs to 243 residues: Venom nerve growth factor 1 (243 aa).

Positions 1–18 (MSMLCYTLIIAFLIGIWA) are cleaved as a signal peptide. Residues 19-125 (APKSEDNVPL…TLNRNIRAKR (107 aa)) constitute a propeptide that is removed on maturation. The segment covering 47 to 66 (GLKTSRNTDQRHPAPKKAED) has biased composition (basic and acidic residues). The interval 47–69 (GLKTSRNTDQRHPAPKKAEDQEL) is disordered. 3 disulfides stabilise this stretch: C139/C204, C182/C232, and C192/C234. N-linked (GlcNAc...) asparagine glycosylation is present at N148.

The protein belongs to the NGF-beta family. As to quaternary structure, homodimer; non-covalently linked. As to expression, expressed by the venom gland.

It localises to the secreted. Nerve growth factor is important for the development and maintenance of the sympathetic and sensory nervous systems. It stimulates division and differentiation of sympathetic and embryonic sensory neurons as well as basal forebrain cholinergic neurons in the brain. Its relevance in the snake venom is not clear. However, it has been shown to inhibit metalloproteinase-dependent proteolysis of platelet glycoprotein Ib alpha, suggesting a metalloproteinase inhibition to prevent metalloprotease autodigestion and/or protection against prey proteases. Binds a lipid between the two protein chains in the homodimer. The lipid-bound form promotes histamine relase from mouse mast cells, contrary to the lipid-free form. In Oxyuranus microlepidotus (Inland taipan), this protein is Venom nerve growth factor 1.